The primary structure comprises 971 residues: Sodium/calcium exchanger 1 (971 aa).

The first 32 residues, 1-32 (MLRLSLPPNVSMGFRLVTLVALLFTHVDHITA), serve as a signal peptide directing secretion. Residues 33–71 (DTEAETGGNETTECTGSYYCKKGVILPIWEPQDPSFGDK) lie on the Extracellular side of the membrane. N-linked (GlcNAc...) asparagine glycosylation occurs at Asn-41. Residues 72–92 (IARATVYFVAMVYMFLGVSII) form a helical membrane-spanning segment. Residues 93–133 (ADRFMSSIEVITSQEKEITIKKPNGETTKTTVRIWNETVSN) are Cytoplasmic-facing. Residues 134–154 (LTLMALGSSAPEILLSVIEVC) form a helical membrane-spanning segment. The Alpha-1 repeat unit spans residues 138 to 178 (ALGSSAPEILLSVIEVCGHNFTAGDLGPSTIVGSAAFNMFI). Topologically, residues 155–167 (GHNFTAGDLGPST) are extracellular. Asn-157 carries N-linked (GlcNAc...) asparagine glycosylation. Residues 168 to 188 (IVGSAAFNMFIIIALCVYVVP) traverse the membrane as a helical segment. Residues 189–201 (DGETRKIKHLRVF) are Cytoplasmic-facing. A helical transmembrane segment spans residues 202–222 (FVTAAWSIFAYTWLYIILSVS). Topologically, residues 223–228 (SPGVVE) are extracellular. A helical membrane pass occupies residues 229-249 (VWEGLLTFFFFPICVVFAWVA). The Cytoplasmic portion of the chain corresponds to 250 to 798 (DRRLLFYKYV…FVPPTEYWNG (549 aa)). The interval 251–270 (RRLLFYKYVYKRYRAGKQRG) is putative calmodulin-binding region. A phosphoserine mark is found at Ser-282 and Ser-389. 2 consecutive Calx-beta domains span residues 393-493 (VNMD…VHLS) and 524-624 (ATIT…IEIG). The Ca(2+) site is built by Glu-417, Asp-453, Asp-478, Asp-479, Ile-481, Glu-483, Glu-486, Asp-530, Asp-531, Asp-532, Glu-548, Asp-584, Asp-610, Glu-611, Glu-612, and Glu-716. Residues 799 to 819 (WACFIVSILMIGLLTAFIGDL) form a helical membrane-spanning segment. Residues 820 to 822 (ASH) are Extracellular-facing. Residues 823–843 (FGCTIGLKDSVTAVVFVALGT) traverse the membrane as a helical segment. Residues 840-876 (ALGTSVPDTFASKVAATQDQYADASIGNVTGSNAVNV) form an Alpha-2 repeat. Over 844–872 (SVPDTFASKVAATQDQYADASIGNVTGSN) the chain is Cytoplasmic. A helical transmembrane segment spans residues 873-893 (AVNVFLGIGVAWSIAAIYHAA). The Extracellular segment spans residues 894–904 (NGEQFKVSPGT). Residues 905-925 (LAFSVTLFTIFAFINVGVLLY) traverse the membrane as a helical segment. Residues 926–942 (RRRPEIGGELGGPRTAK) lie on the Cytoplasmic side of the membrane. The helical transmembrane segment at 943–963 (LLTSSLFVLLWLLYIFFSSLE) threads the bilayer. Topologically, residues 964 to 971 (AYCHIKGF) are extracellular.

It belongs to the Ca(2+):cation antiporter (CaCA) (TC 2.A.19) family. SLC8 subfamily. As to expression, detected in heart, brain cortex and hippocampus (at protein level). Cardiac sarcolemma or brain, and spleen. Expressed in all regions of the kidney, highest levels of expression in the distal convoluted tubule. Expressed throughout the CNS, in decreasing order of abundance in hippocampus, cortex, cerebellum, hypothalamus, midbrain and striatum. Expressed in numerous regions of the brain including multiple cortical layers, hippocampus, septal nuclei, thalamic nuclei, cerebellum, hypothalamus, olfactory bulb and brainstem. Also expressed in various regions of the spinal cord, ventricles and atria of the heart, lung, adrenals and kidney. Isoform 4 seems to be a predominant isoform in aorta, stomach, liver, and kidney.

The protein localises to the cell membrane. The protein resides in the cell projection. It localises to the dendrite. The enzyme catalyses Ca(2+)(in) + 3 Na(+)(out) = Ca(2+)(out) + 3 Na(+)(in). Its activity is regulated as follows. Activated by micromolar levels of Ca(2+). With respect to regulation, only active at low calcium concentrations. Not activated by PKC. Active at all calcium levels tested. Activated by PKC. Its activity is regulated as follows. Only active at low calcium concentrations. Activated by PKC. Functionally, mediates the exchange of one Ca(2+) ion against three to four Na(+) ions across the cell membrane, and thereby contributes to the regulation of cytoplasmic Ca(2+) levels and Ca(2+)-dependent cellular processes. Contributes to Ca(2+) transport during excitation-contraction coupling in muscle. In a first phase, voltage-gated channels mediate the rapid increase of cytoplasmic Ca(2+) levels due to release of Ca(2+) stores from the endoplasmic reticulum. SLC8A1 mediates the export of Ca(2+) from the cell during the next phase, so that cytoplasmic Ca(2+) levels rapidly return to baseline. Required for normal embryonic heart development and the onset of heart contractions. This chain is Sodium/calcium exchanger 1 (Slc8a1), found in Rattus norvegicus (Rat).